The primary structure comprises 257 residues: DNA repair protein RecO (257 aa).

The protein belongs to the RecO family.

In terms of biological role, involved in DNA repair and RecF pathway recombination. The chain is DNA repair protein RecO from Streptococcus thermophilus (strain ATCC BAA-491 / LMD-9).